The following is a 1032-amino-acid chain: MEEQVANAIEIASNPSADPALKTQAFDFVNQLRSDPSGWQVCLSLFTQTPQRSGIVRHVALEVVNSAAQGGLIDLQALAYVKDGLLAYLRQVYGQDAGASDPPNIQNKIAQTITFLFSALYASGWESFFDDLLGLTQKSPSSTTRDNASGIIFYLRVINSIHDEIGDVLVSRSRNEQDKANALKDLIRQRDMQKITSSWQQILSEWRDGNDVIVEMCLKAVGSWVSWIDIGLVVNQTMLDLLFRQLGRAQKEDLRQGEEKVRDAAVDVFTEIIGKKMKPEDKIDMIIFLNLDTIVSQLSNSPPLHGNRFTFKYDTDLAETVAKLVNITVIDIVRALEQEGVSTECKEKANGLLQAFLPHILRYFSDEYDEVCSTVIPCVSDLLTYLRRIAKVNPALASQHSSILLPILKAIIAKMRYDETSSWGEEDEQTDEAEFQELRKRLGILQQMIASINEQLYMEVVSEMVATTFENLRQSGSQMDWRDLDLALHEMFLFGDLAVKAGSLYTKGNPNNQAAERLIEMMLRMVESDIRSFTHPATQLQYTEICVRYSSFFHHHTHLIPGVLENFLQLVHHPIKKVKTRSWYLFQRLVKQLRQYVGNVAQTVVEALGDLLVIRAELPSEVSEGDEMSSEDHELADAIFNSQLYLFEAVGIICSTPTISPDKQVLYLQAVLNPIFLDMEKNLEAAKSQDERAILQIHHDIMALGTLARGFSDWMPGTNTPATLPAPEVSAAFNQVAEATLVALESLKSSFNVRTAARFAFSRLIGVLGSRILPQLPRWIDGLLTQTSSRDEMALFLRLLDQVIFGFKGEIFSILDTLLTPFLQRVFSGIADPTTGTDDEIQLAELKREYLNFLLAVLNNDLGAVIISERNQPIFETVISTIEHFSKDIDDFTTAKMAFSVLSKMSSSWGGPDVIAEASNGTPPSQAPLPGFGQFMITRFSPLCWALPSTPSFNSKDAQAKQVLAEAGGLQRTIYAKTGMEYLTYLRDRELPGMGMGGELIEEFVGALSRLDLKGFRQFFPVCLSNFHILSI.

It belongs to the exportin family.

The protein localises to the nucleus. Its subcellular location is the cytoplasm. Functionally, tRNA nucleus export receptor which facilitates tRNA translocation across the nuclear pore complex. Involved in pre-tRNA splicing, probably by affecting the interaction of pre-tRNA with splicing endonuclease. This is Exportin-T (los1) from Aspergillus fumigatus (strain CBS 144.89 / FGSC A1163 / CEA10) (Neosartorya fumigata).